We begin with the raw amino-acid sequence, 292 residues long: Phosphoribulokinase, chromosomal (292 aa).

G12–S20 contacts ATP.

Belongs to the phosphoribulokinase family. Homooctamer.

The catalysed reaction is D-ribulose 5-phosphate + ATP = D-ribulose 1,5-bisphosphate + ADP + H(+). The protein operates within carbohydrate biosynthesis; Calvin cycle. The chain is Phosphoribulokinase, chromosomal (cfxP) from Cupriavidus necator (strain ATCC 17699 / DSM 428 / KCTC 22496 / NCIMB 10442 / H16 / Stanier 337) (Ralstonia eutropha).